We begin with the raw amino-acid sequence, 299 residues long: Bifunctional protein FolD (299 aa).

NADP(+) contacts are provided by residues 169 to 171, serine 194, and isoleucine 235; that span reads GRS.

The protein belongs to the tetrahydrofolate dehydrogenase/cyclohydrolase family. In terms of assembly, homodimer.

The enzyme catalyses (6R)-5,10-methylene-5,6,7,8-tetrahydrofolate + NADP(+) = (6R)-5,10-methenyltetrahydrofolate + NADPH. It carries out the reaction (6R)-5,10-methenyltetrahydrofolate + H2O = (6R)-10-formyltetrahydrofolate + H(+). The protein operates within one-carbon metabolism; tetrahydrofolate interconversion. Its function is as follows. Catalyzes the oxidation of 5,10-methylenetetrahydrofolate to 5,10-methenyltetrahydrofolate and then the hydrolysis of 5,10-methenyltetrahydrofolate to 10-formyltetrahydrofolate. This Nostoc sp. (strain PCC 7120 / SAG 25.82 / UTEX 2576) protein is Bifunctional protein FolD.